The following is a 185-amino-acid chain: Ribosome-recycling factor (185 aa).

Belongs to the RRF family.

The protein localises to the cytoplasm. In terms of biological role, responsible for the release of ribosomes from messenger RNA at the termination of protein biosynthesis. May increase the efficiency of translation by recycling ribosomes from one round of translation to another. The sequence is that of Ribosome-recycling factor from Myxococcus xanthus (strain DK1622).